Reading from the N-terminus, the 229-residue chain is Transcriptional activator protein IrlR (229 aa).

A Response regulatory domain is found at 2-115; it reads RILIVEDEPK…ELVARVRSIL (114 aa). Aspartate 51 carries the 4-aspartylphosphate modification. The segment at residues 123-221 is a DNA-binding region (ompR/PhoB-type); the sequence is STVLRIADLE…VRGMGYVLEV (99 aa).

In terms of processing, phosphorylated by IrlS.

Member of the two-component regulatory system IrlR/IrlS. May be involved in invasion of eukaryotic cells and heavy-metal resistance. This is Transcriptional activator protein IrlR (irlR) from Burkholderia pseudomallei (strain 1026b).